We begin with the raw amino-acid sequence, 461 residues long: Asparagine--tRNA ligase (461 aa).

This sequence belongs to the class-II aminoacyl-tRNA synthetase family. In terms of assembly, homodimer.

Its subcellular location is the cytoplasm. The enzyme catalyses tRNA(Asn) + L-asparagine + ATP = L-asparaginyl-tRNA(Asn) + AMP + diphosphate + H(+). This chain is Asparagine--tRNA ligase, found in Nitratidesulfovibrio vulgaris (strain DP4) (Desulfovibrio vulgaris).